The primary structure comprises 952 residues: Isoleucine--tRNA ligase (952 aa).

The 'HIGH' region signature appears at 58-68; sequence PYANGDIHIGH. Residue E576 coordinates L-isoleucyl-5'-AMP. Positions 617–621 match the 'KMSKS' region motif; it reads KMSKS. K620 contacts ATP. Zn(2+) contacts are provided by C915, C918, C935, and C938.

The protein belongs to the class-I aminoacyl-tRNA synthetase family. IleS type 1 subfamily. As to quaternary structure, monomer. Requires Zn(2+) as cofactor.

It localises to the cytoplasm. It catalyses the reaction tRNA(Ile) + L-isoleucine + ATP = L-isoleucyl-tRNA(Ile) + AMP + diphosphate. Functionally, catalyzes the attachment of isoleucine to tRNA(Ile). As IleRS can inadvertently accommodate and process structurally similar amino acids such as valine, to avoid such errors it has two additional distinct tRNA(Ile)-dependent editing activities. One activity is designated as 'pretransfer' editing and involves the hydrolysis of activated Val-AMP. The other activity is designated 'posttransfer' editing and involves deacylation of mischarged Val-tRNA(Ile). This Vibrio atlanticus (strain LGP32) (Vibrio splendidus (strain Mel32)) protein is Isoleucine--tRNA ligase.